A 745-amino-acid polypeptide reads, in one-letter code: UPF0508 protein YJR030C (745 aa).

The protein belongs to the UPF0508 family.

In Saccharomyces cerevisiae (strain ATCC 204508 / S288c) (Baker's yeast), this protein is UPF0508 protein YJR030C.